The primary structure comprises 140 residues: Nucleoside diphosphate kinase (140 aa).

Lysine 11, phenylalanine 59, arginine 87, threonine 93, arginine 104, and asparagine 114 together coordinate ATP. The active-site Pros-phosphohistidine intermediate is histidine 117.

Belongs to the NDK family. Homotetramer. Requires Mg(2+) as cofactor.

It is found in the cytoplasm. The enzyme catalyses a 2'-deoxyribonucleoside 5'-diphosphate + ATP = a 2'-deoxyribonucleoside 5'-triphosphate + ADP. The catalysed reaction is a ribonucleoside 5'-diphosphate + ATP = a ribonucleoside 5'-triphosphate + ADP. Functionally, major role in the synthesis of nucleoside triphosphates other than ATP. The ATP gamma phosphate is transferred to the NDP beta phosphate via a ping-pong mechanism, using a phosphorylated active-site intermediate. The sequence is that of Nucleoside diphosphate kinase from Bartonella henselae (strain ATCC 49882 / DSM 28221 / CCUG 30454 / Houston 1) (Rochalimaea henselae).